We begin with the raw amino-acid sequence, 310 residues long: Malate dehydrogenase (310 aa).

NAD(+) contacts are provided by residues 7–13 (GAAGGIG) and aspartate 34. The substrate site is built by arginine 81 and arginine 87. NAD(+) is bound by residues asparagine 94 and 117-119 (ITN). Substrate is bound by residues asparagine 119 and arginine 153. Histidine 177 (proton acceptor) is an active-site residue. Residue methionine 227 coordinates NAD(+).

Belongs to the LDH/MDH superfamily. MDH type 1 family. As to quaternary structure, homodimer.

The catalysed reaction is (S)-malate + NAD(+) = oxaloacetate + NADH + H(+). Catalyzes the reversible oxidation of malate to oxaloacetate. In Pseudoalteromonas translucida (strain TAC 125), this protein is Malate dehydrogenase.